The following is a 390-amino-acid chain: LIM/homeobox protein Lhx4 (390 aa).

LIM zinc-binding domains follow at residues 28–87 (PQCA…RFGT) and 88–150 (KCTA…AKQN). A DNA-binding region (homeobox) is located at residues 157–216 (AKRPRTTITAKQLETLKNAYKNSPKPARHVREQLSSETGLDMRVVQVWFQNRRAKEKRLK). Residues 161 to 181 (RTTITAKQLETLKNAYKNSPK) form an interaction with DNA region. Positions 199 to 211 (RVVQVWFQNRRAK) are interaction with 5-mCpG DNA. Disordered regions lie at residues 230–253 (SVKR…GVSD) and 356–390 (AGGP…HPPF).

The protein resides in the nucleus. In terms of biological role, may play a critical role in the development of respiratory control mechanisms and in the normal growth and maturation of the lung. Binds preferentially to methylated DNA. The chain is LIM/homeobox protein Lhx4 (LHX4) from Homo sapiens (Human).